A 243-amino-acid chain; its full sequence is Pyridoxine 5'-phosphate synthase (243 aa).

Asn-9 serves as a coordination point for 3-amino-2-oxopropyl phosphate. 11–12 (DH) contacts 1-deoxy-D-xylulose 5-phosphate. Arg-20 serves as a coordination point for 3-amino-2-oxopropyl phosphate. Catalysis depends on His-45, which acts as the Proton acceptor. 1-deoxy-D-xylulose 5-phosphate-binding residues include Arg-47 and His-52. The active-site Proton acceptor is the Glu-72. Thr-102 is a 1-deoxy-D-xylulose 5-phosphate binding site. His-193 functions as the Proton donor in the catalytic mechanism. 3-amino-2-oxopropyl phosphate-binding positions include Gly-194 and 215-216 (GH).

This sequence belongs to the PNP synthase family. Homooctamer; tetramer of dimers.

The protein resides in the cytoplasm. The catalysed reaction is 3-amino-2-oxopropyl phosphate + 1-deoxy-D-xylulose 5-phosphate = pyridoxine 5'-phosphate + phosphate + 2 H2O + H(+). It functions in the pathway cofactor biosynthesis; pyridoxine 5'-phosphate biosynthesis; pyridoxine 5'-phosphate from D-erythrose 4-phosphate: step 5/5. Functionally, catalyzes the complicated ring closure reaction between the two acyclic compounds 1-deoxy-D-xylulose-5-phosphate (DXP) and 3-amino-2-oxopropyl phosphate (1-amino-acetone-3-phosphate or AAP) to form pyridoxine 5'-phosphate (PNP) and inorganic phosphate. This chain is Pyridoxine 5'-phosphate synthase, found in Salmonella paratyphi A (strain ATCC 9150 / SARB42).